A 501-amino-acid chain; its full sequence is ADP,ATP carrier protein 3 (501 aa).

Helical transmembrane passes span 23-43, 59-79, 90-110, 146-166, 183-203, 227-247, 293-313, 326-346, 361-381, 387-407, 446-466, and 470-490; these read LKLF…FGAL, IISF…TVLY, YIFY…AYII, YALM…LMFW, PVLG…LVFF, IMLQ…MLLF, IALL…PWKA, VNFM…FMII, LLTP…IIFI, CFGD…QNIL, FGKS…PTAT, and IIIY…WNVI.

Belongs to the ADP/ATP translocase tlc family.

The protein resides in the cell membrane. Its function is as follows. Provides the rickettsial cell with host ATP in exchange for rickettsial ADP. This is an obligate exchange system. This energy acquiring activity is an important component of rickettsial parasitism. The sequence is that of ADP,ATP carrier protein 3 (tlcC) from Rickettsia conorii (strain ATCC VR-613 / Malish 7).